Here is a 254-residue protein sequence, read N- to C-terminus: MASSTISLQSISMTTLNNLSYSKQFHRSSLLGFSKSFQNFGISSNGPGSSSPTSFTPKKKLTPTRALSQNLGNTENPRPSKVQELSVYEINDLDRHSPKILKNAFSFRFGLGDLVPFTNKLYTGDLKKRVGITAGLCVVIEHVPEKNGDRFEATYSFYFGDYGHLSVQGPYLTYEDSFLAITGGAGIFEGAYGQVKLQQLVYPTKLFYTFYLKGLANDLPLELIGTPVPPSKDVEPAPEAKALKPSGVVSNFTN.

The N-terminal 78 residues, 1-78, are a transit peptide targeting the chloroplast; the sequence is MASSTISLQS…QNLGNTENPR (78 aa). Residues 44-56 show a composition bias toward low complexity; it reads SNGPGSSSPTSFT. Residues 44–79 form a disordered region; that stretch reads SNGPGSSSPTSFTPKKKLTPTRALSQNLGNTENPRP. Polar residues predominate over residues 65-77; it reads RALSQNLGNTENP.

This sequence belongs to the allene oxide cyclase family. In terms of tissue distribution, highly expressed in fully developed leaves.

Its subcellular location is the plastid. It is found in the chloroplast. The enzyme catalyses (9Z,13S,15Z)-12,13-epoxyoctadeca-9,11,15-trienoate = (9S,13S,15Z)-12-oxophyto-10,15-dienoate. In terms of biological role, involved in the production of 12-oxo-phytodienoic acid (OPDA), a precursor of jasmonic acid. The polypeptide is Allene oxide cyclase 1, chloroplastic (AOC1) (Arabidopsis thaliana (Mouse-ear cress)).